Consider the following 325-residue polypeptide: Serpentine receptor class delta-59 (325 aa).

Helical transmembrane passes span 14–34, 45–65, 75–95, 97–117, 132–152, 190–210, 235–255, and 275–295; these read WYWPFCGVLAIIFQTILLHLI, LKIFLYNTSCVQIALITFAFL, ISAAVLSLGPCSYVSPTTCFI, YHVFMATSFGAGSAIAITVLF, TYIMVLASYIAPLVVLIIPFT, FLSATLLLSIGAYGIPIGCLI, TLIHGLIVQSMLPFISYIPSF, and ILVSSAFPALLDPFISFYFIV.

Belongs to the nematode receptor-like protein srd family.

It is found in the membrane. The polypeptide is Serpentine receptor class delta-59 (srd-59) (Caenorhabditis elegans).